Reading from the N-terminus, the 263-residue chain is Hydroxyethylthiazole kinase (263 aa).

Substrate is bound at residue Met-41. Positions 117 and 163 each coordinate ATP. Gly-190 contributes to the substrate binding site.

This sequence belongs to the Thz kinase family. Mg(2+) serves as cofactor.

The enzyme catalyses 5-(2-hydroxyethyl)-4-methylthiazole + ATP = 4-methyl-5-(2-phosphooxyethyl)-thiazole + ADP + H(+). The protein operates within cofactor biosynthesis; thiamine diphosphate biosynthesis; 4-methyl-5-(2-phosphoethyl)-thiazole from 5-(2-hydroxyethyl)-4-methylthiazole: step 1/1. Catalyzes the phosphorylation of the hydroxyl group of 4-methyl-5-beta-hydroxyethylthiazole (THZ). This chain is Hydroxyethylthiazole kinase, found in Lactiplantibacillus plantarum (strain ATCC BAA-793 / NCIMB 8826 / WCFS1) (Lactobacillus plantarum).